Here is a 75-residue protein sequence, read N- to C-terminus: MRLPAVTPGWPAIPPGATLGGFDGQGRRSWATISRAPSGASCSRNRSATRTYGWGATATTPATITGIPSTTAPAT.

Its function is as follows. Required for optimal exotoxin A production. This chain is Protein RegB (regB), found in Pseudomonas aeruginosa (strain ATCC 15692 / DSM 22644 / CIP 104116 / JCM 14847 / LMG 12228 / 1C / PRS 101 / PAO1).